The primary structure comprises 99 residues: Putative RNA-binding protein RbpE (99 aa).

The 78-residue stretch at 2–79 folds into the RRM domain; that stretch reads SIYVGNLSYS…RVLKVNKARP (78 aa). Residues 78-99 are disordered; that stretch reads RPREEKGARSGGGSWSRNNGGY. Over residues 86–99 the composition is skewed to gly residues; sequence RSGGGSWSRNNGGY.

This Nostoc sp. (strain PCC 7120 / SAG 25.82 / UTEX 2576) protein is Putative RNA-binding protein RbpE (rbpE).